A 226-amino-acid polypeptide reads, in one-letter code: Clarin-3 (226 aa).

A helical membrane pass occupies residues 8–28; it reads LMFLSGFLTSLGSVVVICSIL. N-linked (GlcNAc...) asparagine glycosylation is present at asparagine 46. The next 3 helical transmembrane spans lie at 92 to 112, 128 to 148, and 181 to 201; these read VVIL…VFTF, GVYT…VLFV, and FWLT…IIFY.

This sequence belongs to the clarin family.

The protein resides in the membrane. The protein is Clarin-3 (Clrn3) of Mus musculus (Mouse).